We begin with the raw amino-acid sequence, 103 residues long: Nucleoid-associated protein A2cp1_3777 (103 aa).

This sequence belongs to the YbaB/EbfC family. Homodimer.

It is found in the cytoplasm. Its subcellular location is the nucleoid. Its function is as follows. Binds to DNA and alters its conformation. May be involved in regulation of gene expression, nucleoid organization and DNA protection. The sequence is that of Nucleoid-associated protein A2cp1_3777 from Anaeromyxobacter dehalogenans (strain 2CP-1 / ATCC BAA-258).